The chain runs to 98 residues: Late cornified envelope-like proline-rich protein 1 (98 aa).

The tract at residues 1 to 26 (MSSDDKSKSNDPKTEPKNCDPKCEQK) is disordered.

Belongs to the cornifin (SPRR) family.

The sequence is that of Late cornified envelope-like proline-rich protein 1 (LELP1) from Homo sapiens (Human).